The following is a 266-amino-acid chain: Auxin-responsive protein IAA21 (266 aa).

The EAR-like (transcriptional repression) signature appears at 24-28 (LRLGL). The tract at residues 27 to 50 (GLPGTAEEAESEGGGGGGTDAAPL) is disordered. Residues 146-248 (CLYVKVSMDG…SCRRLRIMKG (103 aa)) form the PB1 domain.

It belongs to the Aux/IAA family. In terms of assembly, homodimers and heterodimers. Highly expressed in flowers. Expressed in roots and seedlings.

It localises to the nucleus. Functionally, aux/IAA proteins are short-lived transcriptional factors that function as repressors of early auxin response genes at low auxin concentrations. This is Auxin-responsive protein IAA21 (IAA21) from Oryza sativa subsp. japonica (Rice).